We begin with the raw amino-acid sequence, 309 residues long: Ribosomal RNA small subunit methyltransferase H (309 aa).

Residues 41–43 (GGH), D61, F85, D102, and Q109 contribute to the S-adenosyl-L-methionine site.

It belongs to the methyltransferase superfamily. RsmH family.

The protein resides in the cytoplasm. It carries out the reaction cytidine(1402) in 16S rRNA + S-adenosyl-L-methionine = N(4)-methylcytidine(1402) in 16S rRNA + S-adenosyl-L-homocysteine + H(+). Functionally, specifically methylates the N4 position of cytidine in position 1402 (C1402) of 16S rRNA. The sequence is that of Ribosomal RNA small subunit methyltransferase H from Albidiferax ferrireducens (strain ATCC BAA-621 / DSM 15236 / T118) (Rhodoferax ferrireducens).